Consider the following 275-residue polypeptide: Large ribosomal subunit protein uL2 (275 aa).

The interval 225-275 (MNPIDHPHGGGEGRTSGGRHPVTPWGKPTKGKKTRSNKKTDRLIMRRRQTQ) is disordered.

The protein belongs to the universal ribosomal protein uL2 family. Part of the 50S ribosomal subunit. Forms a bridge to the 30S subunit in the 70S ribosome.

Its function is as follows. One of the primary rRNA binding proteins. Required for association of the 30S and 50S subunits to form the 70S ribosome, for tRNA binding and peptide bond formation. It has been suggested to have peptidyltransferase activity; this is somewhat controversial. Makes several contacts with the 16S rRNA in the 70S ribosome. The polypeptide is Large ribosomal subunit protein uL2 (Paramagnetospirillum magneticum (strain ATCC 700264 / AMB-1) (Magnetospirillum magneticum)).